The following is a 341-amino-acid chain: Putative MAGE domain-containing protein MAGEA13P (341 aa).

Disordered regions lie at residues 1–21 (MPHS…APKE) and 78–101 (KATP…GASQ). Over residues 87–97 (ESSRSQEKKDP) the composition is skewed to basic and acidic residues. The MAGE domain maps to 105–304 (LEKKVDELVK…SSFPLLYEEA (200 aa)).

This chain is Putative MAGE domain-containing protein MAGEA13P (MAGEA13P), found in Homo sapiens (Human).